A 38-amino-acid chain; its full sequence is Bacteriocin curvaticin FS47 (38 aa).

The protein localises to the secreted. Its function is as follows. Bacteriocin active against Listeria monocytogenes, Pediococcus, Enterococcus, Lactobacilli and Bacilli. This chain is Bacteriocin curvaticin FS47, found in Latilactobacillus curvatus (Lactobacillus curvatus).